A 284-amino-acid chain; its full sequence is Polyamine aminopropyltransferase (284 aa).

The 236-residue stretch at 2 to 237 folds into the PABS domain; it reads ELWYTEQHTE…GHWLFGFASK (236 aa). Residue Gln31 participates in S-methyl-5'-thioadenosine binding. Spermidine contacts are provided by His62 and Asp86. Residues Glu106 and 137–138 contribute to the S-methyl-5'-thioadenosine site; that span reads DG. The Proton acceptor role is filled by Asp155. Residue 155–158 coordinates spermidine; the sequence is DSTD. Pro162 lines the S-methyl-5'-thioadenosine pocket.

It belongs to the spermidine/spermine synthase family. As to quaternary structure, homodimer or homotetramer.

The protein localises to the cytoplasm. It catalyses the reaction S-adenosyl 3-(methylsulfanyl)propylamine + putrescine = S-methyl-5'-thioadenosine + spermidine + H(+). It functions in the pathway amine and polyamine biosynthesis; spermidine biosynthesis; spermidine from putrescine: step 1/1. Catalyzes the irreversible transfer of a propylamine group from the amino donor S-adenosylmethioninamine (decarboxy-AdoMet) to putrescine (1,4-diaminobutane) to yield spermidine. The polypeptide is Polyamine aminopropyltransferase (Clostridium beijerinckii (strain ATCC 51743 / NCIMB 8052) (Clostridium acetobutylicum)).